Consider the following 311-residue polypeptide: Interleukin-20 receptor subunit beta (311 aa).

The signal sequence occupies residues 1–29 (MQTFTMVLEEIWTSLFMWFFYALIPCLLT). The Extracellular segment spans residues 30-233 (DEVAILPAPQ…VEVQGEAIPL (204 aa)). Fibronectin type-III domains follow at residues 37–136 (APQN…RNST) and 144–228 (EITK…EVQG). Asn-40 carries N-linked (GlcNAc...) asparagine glycosylation. A disulfide bond links Cys-89 and Cys-97. A glycan (N-linked (GlcNAc...) asparagine) is linked at Asn-134. An intrachain disulfide couples Cys-202 to Cys-223. The helical transmembrane segment at 234-254 (VLALFAFVGFMLILVVVPLFV) threads the bilayer. Residues 255–311 (WKMGRLLQYSCCPVVVLPDTLKITNSPQKLISCRREEVDACATAVMSPEELLRAWIS) are Cytoplasmic-facing.

Belongs to the type II cytokine receptor family. Heterodimer with IL20RA and heterodimer with IL22RA1. As to expression, widely expressed with highest levels in skin and testis. Highly expressed in psoriatic skin.

Its subcellular location is the membrane. The IL20RA/IL20RB dimer is a receptor for IL19, IL20 and IL24. The IL22RA1/IL20RB dimer is a receptor for IL20 and IL24. This Homo sapiens (Human) protein is Interleukin-20 receptor subunit beta (IL20RB).